We begin with the raw amino-acid sequence, 118 residues long: Small ribosomal subunit protein uS13 (118 aa).

The disordered stretch occupies residues 91 to 118; sequence HRRGLPVRGQRTKTNARTRKGPRKPIKK.

Belongs to the universal ribosomal protein uS13 family. Part of the 30S ribosomal subunit. Forms a loose heterodimer with protein S19. Forms two bridges to the 50S subunit in the 70S ribosome.

In terms of biological role, located at the top of the head of the 30S subunit, it contacts several helices of the 16S rRNA. In the 70S ribosome it contacts the 23S rRNA (bridge B1a) and protein L5 of the 50S subunit (bridge B1b), connecting the 2 subunits; these bridges are implicated in subunit movement. Contacts the tRNAs in the A and P-sites. This is Small ribosomal subunit protein uS13 from Hamiltonella defensa subsp. Acyrthosiphon pisum (strain 5AT).